The sequence spans 457 residues: D-inositol 3-phosphate glycosyltransferase (457 aa).

1D-myo-inositol 3-phosphate is bound at residue histidine 34. Residues 40–41 (QP) and glycine 48 each bind UDP-N-acetyl-alpha-D-glucosamine. 1D-myo-inositol 3-phosphate contacts are provided by residues 45–50 (DAGGMN), lysine 103, tyrosine 136, threonine 160, and arginine 180. UDP-N-acetyl-alpha-D-glucosamine-binding residues include arginine 267, lysine 272, and valine 333. Residues phenylalanine 342, arginine 343, and alanine 345 each coordinate Mg(2+). Glutamate 355 and glutamate 363 together coordinate UDP-N-acetyl-alpha-D-glucosamine. Threonine 369 lines the Mg(2+) pocket.

The protein belongs to the glycosyltransferase group 1 family. MshA subfamily. Homodimer.

It catalyses the reaction 1D-myo-inositol 3-phosphate + UDP-N-acetyl-alpha-D-glucosamine = 1D-myo-inositol 2-acetamido-2-deoxy-alpha-D-glucopyranoside 3-phosphate + UDP + H(+). Functionally, catalyzes the transfer of a N-acetyl-glucosamine moiety to 1D-myo-inositol 3-phosphate to produce 1D-myo-inositol 2-acetamido-2-deoxy-glucopyranoside 3-phosphate in the mycothiol biosynthesis pathway. This Streptomyces coelicolor (strain ATCC BAA-471 / A3(2) / M145) protein is D-inositol 3-phosphate glycosyltransferase.